Here is a 328-residue protein sequence, read N- to C-terminus: DNA-directed RNA polymerase subunit alpha (328 aa).

The interval 1-231 (MIYQMQMPTK…DHITFFANFS (231 aa)) is alpha N-terminal domain (alpha-NTD). An alpha C-terminal domain (alpha-CTD) region spans residues 247–328 (DEFESMRKLL…MDITRYQLKG (82 aa)).

Belongs to the RNA polymerase alpha chain family. In terms of assembly, homodimer. The RNAP catalytic core consists of 2 alpha, 1 beta, 1 beta' and 1 omega subunit. When a sigma factor is associated with the core the holoenzyme is formed, which can initiate transcription.

The enzyme catalyses RNA(n) + a ribonucleoside 5'-triphosphate = RNA(n+1) + diphosphate. Functionally, DNA-dependent RNA polymerase catalyzes the transcription of DNA into RNA using the four ribonucleoside triphosphates as substrates. This chain is DNA-directed RNA polymerase subunit alpha, found in Chlorobaculum tepidum (strain ATCC 49652 / DSM 12025 / NBRC 103806 / TLS) (Chlorobium tepidum).